An 841-amino-acid chain; its full sequence is pre-rRNA 2'-O-ribose RNA methyltransferase FTSJ3 (841 aa).

S-adenosyl-L-methionine-binding residues include glycine 56, tryptophan 58, aspartate 76, aspartate 92, and aspartate 117. Lysine 157 acts as the Proton acceptor in catalysis. A disordered region spans residues 332-366 (ISLSSGEEDEGNEEDSTAGTTEQPSKEEEEEEQLN). Serine 333, serine 335, serine 336, serine 347, and serine 356 each carry phosphoserine. Residues 337–347 (GEEDEGNEEDS) show a composition bias toward acidic residues. A coiled-coil region spans residues 356 to 404 (SKEEEEEEQLNQTLAEMKAQEVAELKRKKKKLLREQRKQRERVELKMDL). Residue lysine 357 forms a Glycyl lysine isopeptide (Lys-Gly) (interchain with G-Cter in SUMO2) linkage. Arginine 389 carries the post-translational modification Citrulline. Residues 454 to 482 (VSDVEDDGDDTSLDSDLDPEELAGVRGHQ) are disordered. The span at 456-474 (DVEDDGDDTSLDSDLDPEE) shows a compositional bias: acidic residues. Serine 547 bears the Phosphoserine mark. Threonine 567 carries the post-translational modification Phosphothreonine. Lysine 573 participates in a covalent cross-link: Glycyl lysine isopeptide (Lys-Gly) (interchain with G-Cter in SUMO2). Serine 578 is subject to Phosphoserine. The interval 579-654 (PLYQDEAPKG…IVPIEDPAKH (76 aa)) is disordered. Lysine 637 is covalently cross-linked (Glycyl lysine isopeptide (Lys-Gly) (interchain with G-Cter in SUMO2)). Position 638 is a phosphoserine (serine 638). Lysine 653 participates in a covalent cross-link: Glycyl lysine isopeptide (Lys-Gly) (interchain with G-Cter in SUMO2). Phosphoserine is present on serine 670. A Glycyl lysine isopeptide (Lys-Gly) (interchain with G-Cter in SUMO2) cross-link involves residue lysine 672. Serine 682 bears the Phosphoserine mark. Residue lysine 704 forms a Glycyl lysine isopeptide (Lys-Gly) (interchain with G-Cter in SUMO2) linkage. A coiled-coil region spans residues 733–771 (IKKVAEAKARKKRRMLKRLEQTRKKAEAVVNTVDISERE). Arginine 777 bears the Citrulline mark. Basic residues predominate over residues 805-815 (VRRPAGVRGHF). The segment at 805-841 (VRRPAGVRGHFKVVDSRMKKDQRAQQRKEQKKKHKRK) is disordered. Basic and acidic residues predominate over residues 816–832 (KVVDSRMKKDQRAQQRK).

The protein belongs to the class I-like SAM-binding methyltransferase superfamily. RNA methyltransferase RlmE family. SPB1 subfamily. As to quaternary structure, interacts with NIP7. Citrullinated by PADI4.

It is found in the nucleus. The protein localises to the nucleolus. It catalyses the reaction a ribonucleotide in rRNA + S-adenosyl-L-methionine = a 2'-O-methylribonucleotide in rRNA + S-adenosyl-L-homocysteine + H(+). Functionally, RNA 2'-O-methyltransferase involved in the processing of the 34S pre-rRNA to 18S rRNA and in 40S ribosomal subunit formation. In Pongo abelii (Sumatran orangutan), this protein is pre-rRNA 2'-O-ribose RNA methyltransferase FTSJ3.